The following is a 130-amino-acid chain: Glycine cleavage system H protein (130 aa).

The Lipoyl-binding domain maps to 24 to 106; that stretch reads TVTIGITDHA…YDEGWFFKVK (83 aa). Lys65 bears the N6-lipoyllysine mark.

Belongs to the GcvH family. The glycine cleavage system is composed of four proteins: P, T, L and H. Requires (R)-lipoate as cofactor.

Its function is as follows. The glycine cleavage system catalyzes the degradation of glycine. The H protein shuttles the methylamine group of glycine from the P protein to the T protein. In Teredinibacter turnerae (strain ATCC 39867 / T7901), this protein is Glycine cleavage system H protein.